Here is a 125-residue protein sequence, read N- to C-terminus: Large ribosomal subunit protein bL19 (125 aa).

Belongs to the bacterial ribosomal protein bL19 family.

Its function is as follows. This protein is located at the 30S-50S ribosomal subunit interface and may play a role in the structure and function of the aminoacyl-tRNA binding site. The polypeptide is Large ribosomal subunit protein bL19 (Ehrlichia ruminantium (strain Welgevonden)).